A 208-amino-acid chain; its full sequence is Protein-L-isoaspartate O-methyltransferase (208 aa).

Residue S59 is part of the active site.

The protein belongs to the methyltransferase superfamily. L-isoaspartyl/D-aspartyl protein methyltransferase family.

It localises to the cytoplasm. The catalysed reaction is [protein]-L-isoaspartate + S-adenosyl-L-methionine = [protein]-L-isoaspartate alpha-methyl ester + S-adenosyl-L-homocysteine. In terms of biological role, catalyzes the methyl esterification of L-isoaspartyl residues in peptides and proteins that result from spontaneous decomposition of normal L-aspartyl and L-asparaginyl residues. It plays a role in the repair and/or degradation of damaged proteins. This is Protein-L-isoaspartate O-methyltransferase from Shigella sonnei (strain Ss046).